The chain runs to 138 residues: ATP synthase epsilon chain (138 aa).

It belongs to the ATPase epsilon chain family. As to quaternary structure, F-type ATPases have 2 components, CF(1) - the catalytic core - and CF(0) - the membrane proton channel. CF(1) has five subunits: alpha(3), beta(3), gamma(1), delta(1), epsilon(1). CF(0) has three main subunits: a, b and c.

It is found in the cell inner membrane. Functionally, produces ATP from ADP in the presence of a proton gradient across the membrane. This is ATP synthase epsilon chain from Idiomarina loihiensis (strain ATCC BAA-735 / DSM 15497 / L2-TR).